A 211-amino-acid chain; its full sequence is Peptidyl-prolyl cis-trans isomerase-like 3 (211 aa).

The region spanning 1-204 (MSVTLHTTHG…ETLRINRVTI (204 aa)) is the PPIase cyclophilin-type domain.

It belongs to the cyclophilin-type PPIase family. PPIL3 subfamily.

It carries out the reaction [protein]-peptidylproline (omega=180) = [protein]-peptidylproline (omega=0). In terms of biological role, PPIases accelerate the folding of proteins. It catalyzes the cis-trans isomerization of proline imidic peptide bonds in oligopeptides. The protein is Peptidyl-prolyl cis-trans isomerase-like 3 (cyp10) of Emericella nidulans (strain FGSC A4 / ATCC 38163 / CBS 112.46 / NRRL 194 / M139) (Aspergillus nidulans).